We begin with the raw amino-acid sequence, 301 residues long: NTE family protein RssA (301 aa).

Positions 8-168 (LALGSGAARG…VNPIPISLTR (161 aa)) constitute a PNPLA domain. A GXSXG motif is present at residues 39-43 (GCSIG). S41 functions as the Nucleophile in the catalytic mechanism. The Proton acceptor role is filled by D155. Residues 155 to 157 (DGA) carry the DGA/G motif.

The protein belongs to the NTE family.

The protein is NTE family protein RssA (rssA) of Escherichia coli (strain K12).